The chain runs to 68 residues: ATP-dependent 6-phosphofructokinase (68 aa).

17 to 20 is an ATP binding site; the sequence is GDGT. Residue aspartate 18 coordinates Mg(2+). Residue aspartate 48 is the Proton acceptor of the active site.

Belongs to the phosphofructokinase type A (PFKA) family. PPi-dependent PFK group II subfamily. Atypical ATP-dependent clade 'X' sub-subfamily. As to quaternary structure, homotetramer. The cofactor is Mg(2+).

The protein localises to the cytoplasm. It catalyses the reaction beta-D-fructose 6-phosphate + ATP = beta-D-fructose 1,6-bisphosphate + ADP + H(+). It participates in carbohydrate degradation; glycolysis; D-glyceraldehyde 3-phosphate and glycerone phosphate from D-glucose: step 3/4. Its activity is regulated as follows. Allosterically activated by AMP. Catalyzes the phosphorylation of D-fructose 6-phosphate to fructose 1,6-bisphosphate by ATP, the first committing step of glycolysis. The protein is ATP-dependent 6-phosphofructokinase (PFK) of Triticum aestivum (Wheat).